The chain runs to 548 residues: Membrane protein insertase YidC (548 aa).

A helical membrane pass occupies residues 6–26 (NLLVIALLFVSFMIWQAWEQD). The tract at residues 28–56 (NPQPQTQQTTQTTTTAAGSAADQGVPASG) is disordered. The span at 29–42 (PQPQTQQTTQTTTT) shows a compositional bias: low complexity. The next 4 membrane-spanning stretches (helical) occupy residues 350 to 370 (FVGN…GIMY), 424 to 444 (FPLI…MGSI), 458 to 478 (LSAQ…MFFI), and 499 to 519 (PVIF…YYIV).

It belongs to the OXA1/ALB3/YidC family. Type 1 subfamily. In terms of assembly, interacts with the Sec translocase complex via SecD. Specifically interacts with transmembrane segments of nascent integral membrane proteins during membrane integration.

The protein localises to the cell inner membrane. Required for the insertion and/or proper folding and/or complex formation of integral membrane proteins into the membrane. Involved in integration of membrane proteins that insert both dependently and independently of the Sec translocase complex, as well as at least some lipoproteins. Aids folding of multispanning membrane proteins. This is Membrane protein insertase YidC from Salmonella typhimurium (strain LT2 / SGSC1412 / ATCC 700720).